The sequence spans 394 residues: GTPase Obg (394 aa).

In terms of domain architecture, Obg spans 4–162; sequence SNFVDYVKIY…LMVILELKLL (159 aa). In terms of domain architecture, OBG-type G spans 163 to 329; the sequence is ADVGLVGFPN…LKDILWTELN (167 aa). Residues 169–176, 194–198, 216–219, 283–286, and 310–312 each bind GTP; these read GFPNAGKS, FTTLE, DIPG, TKSD, and SSV. Positions 176 and 196 each coordinate Mg(2+). Positions 358-394 are disordered; the sequence is KDMGEDEDFEYEYEEDADDDFDYEYEDENWDEEEEKK. Positions 361–394 are enriched in acidic residues; that stretch reads GEDEDFEYEYEEDADDDFDYEYEDENWDEEEEKK.

It belongs to the TRAFAC class OBG-HflX-like GTPase superfamily. OBG GTPase family. As to quaternary structure, monomer. Mg(2+) is required as a cofactor.

It is found in the cytoplasm. An essential GTPase which binds GTP, GDP and possibly (p)ppGpp with moderate affinity, with high nucleotide exchange rates and a fairly low GTP hydrolysis rate. Plays a role in control of the cell cycle, stress response, ribosome biogenesis and in those bacteria that undergo differentiation, in morphogenesis control. The chain is GTPase Obg from Phocaeicola vulgatus (strain ATCC 8482 / DSM 1447 / JCM 5826 / CCUG 4940 / NBRC 14291 / NCTC 11154) (Bacteroides vulgatus).